The primary structure comprises 737 residues: Catalase-peroxidase (737 aa).

The tract at residues 1–33 is disordered; the sequence is MPEATEHPPIGEAQTEPAQSGCPMVIKPPVEGG. Residues 107-235 constitute a cross-link (tryptophyl-tyrosyl-methioninium (Trp-Tyr) (with M-261)); the sequence is WHAAGTYRVQ…LGASHMGLIY (129 aa). The active-site Proton acceptor is the His108. The tryptophyl-tyrosyl-methioninium (Tyr-Met) (with W-107) cross-link spans 235 to 261; sequence YVNPEGPEGNPDPIAAAIDIRETFGRM. His276 is a binding site for heme.

It belongs to the peroxidase family. Peroxidase/catalase subfamily. Homodimer or homotetramer. It depends on heme b as a cofactor. Post-translationally, formation of the three residue Trp-Tyr-Met cross-link is important for the catalase, but not the peroxidase activity of the enzyme.

The enzyme catalyses H2O2 + AH2 = A + 2 H2O. It catalyses the reaction 2 H2O2 = O2 + 2 H2O. In terms of biological role, bifunctional enzyme with both catalase and broad-spectrum peroxidase activity. May play a role in polycyclic aromatic hydrocarbon (PAH) metabolism. The sequence is that of Catalase-peroxidase from Mycolicibacterium vanbaalenii (Mycobacterium vanbaalenii).